The chain runs to 112 residues: MPYRKFSRPTNHRRALLRNITTSLLKHGKIVTTEPKAKELRRIADKMITLGKQGDLHARRQALAFIQEESVVTHLFKEIAPKYATRQGGYTRVLKAGFRRGDAAPMCIVELV.

This sequence belongs to the bacterial ribosomal protein bL17 family. As to quaternary structure, part of the 50S ribosomal subunit. Contacts protein L32.

The polypeptide is Large ribosomal subunit protein bL17 (Heliobacterium modesticaldum (strain ATCC 51547 / Ice1)).